Reading from the N-terminus, the 387-residue chain is 3-ketoacyl-CoA thiolase (387 aa).

Residue Cys91 is the Acyl-thioester intermediate of the active site. Active-site proton acceptor residues include His343 and Cys373.

This sequence belongs to the thiolase-like superfamily. Thiolase family. Heterotetramer of two alpha chains (FadB) and two beta chains (FadA).

It is found in the cytoplasm. It catalyses the reaction an acyl-CoA + acetyl-CoA = a 3-oxoacyl-CoA + CoA. It participates in lipid metabolism; fatty acid beta-oxidation. In terms of biological role, catalyzes the final step of fatty acid oxidation in which acetyl-CoA is released and the CoA ester of a fatty acid two carbons shorter is formed. The sequence is that of 3-ketoacyl-CoA thiolase from Vibrio vulnificus (strain CMCP6).